Reading from the N-terminus, the 148-residue chain is Transcriptional regulator MraZ (148 aa).

SpoVT-AbrB domains lie at 7-56 (KERH…EPDI) and 85-128 (LDVV…APER).

This sequence belongs to the MraZ family. As to quaternary structure, forms oligomers.

The protein localises to the cytoplasm. Its subcellular location is the nucleoid. The sequence is that of Transcriptional regulator MraZ from Chlorobium phaeobacteroides (strain DSM 266 / SMG 266 / 2430).